Reading from the N-terminus, the 366-residue chain is Chorismate synthase (366 aa).

NADP(+) contacts are provided by Arg48 and Arg54. FMN contacts are provided by residues 125–127 (RSS), 241–242 (NA), Gly285, 300–304 (KPTSS), and Arg326.

This sequence belongs to the chorismate synthase family. As to quaternary structure, homotetramer. The cofactor is FMNH2.

The enzyme catalyses 5-O-(1-carboxyvinyl)-3-phosphoshikimate = chorismate + phosphate. Its pathway is metabolic intermediate biosynthesis; chorismate biosynthesis; chorismate from D-erythrose 4-phosphate and phosphoenolpyruvate: step 7/7. Its function is as follows. Catalyzes the anti-1,4-elimination of the C-3 phosphate and the C-6 proR hydrogen from 5-enolpyruvylshikimate-3-phosphate (EPSP) to yield chorismate, which is the branch point compound that serves as the starting substrate for the three terminal pathways of aromatic amino acid biosynthesis. This reaction introduces a second double bond into the aromatic ring system. The sequence is that of Chorismate synthase from Cereibacter sphaeroides (strain ATCC 17029 / ATH 2.4.9) (Rhodobacter sphaeroides).